The primary structure comprises 369 residues: Anhydro-N-acetylmuramic acid kinase (369 aa).

12-19 (GTSLDGVD) lines the ATP pocket.

This sequence belongs to the anhydro-N-acetylmuramic acid kinase family.

The enzyme catalyses 1,6-anhydro-N-acetyl-beta-muramate + ATP + H2O = N-acetyl-D-muramate 6-phosphate + ADP + H(+). The protein operates within amino-sugar metabolism; 1,6-anhydro-N-acetylmuramate degradation. It functions in the pathway cell wall biogenesis; peptidoglycan recycling. Its function is as follows. Catalyzes the specific phosphorylation of 1,6-anhydro-N-acetylmuramic acid (anhMurNAc) with the simultaneous cleavage of the 1,6-anhydro ring, generating MurNAc-6-P. Is required for the utilization of anhMurNAc either imported from the medium or derived from its own cell wall murein, and thus plays a role in cell wall recycling. This Shigella flexneri protein is Anhydro-N-acetylmuramic acid kinase.